The primary structure comprises 421 residues: GTPase Obg (421 aa).

The Obg domain maps to 1-158 (MFIDVAKIEL…KTIKLELKLL (158 aa)). A disordered region spans residues 21–40 (AFRREKYEPSGGPAGGDGGD). Residues 159 to 328 (ADVGLIGLPN…LMYLIADTLD (170 aa)) form the OBG-type G domain. GTP is bound by residues 165-172 (GLPNVGKS), 190-194 (FTTLE), 211-214 (DIPG), 281-284 (NKTD), and 309-311 (SAA). Mg(2+) is bound by residues Ser172 and Thr192. In terms of domain architecture, OCT spans 344 to 421 (FEEEKEPDFK…IGDVEFDFYE (78 aa)).

Belongs to the TRAFAC class OBG-HflX-like GTPase superfamily. OBG GTPase family. As to quaternary structure, monomer. Requires Mg(2+) as cofactor.

It is found in the cytoplasm. In terms of biological role, an essential GTPase which binds GTP, GDP and possibly (p)ppGpp with moderate affinity, with high nucleotide exchange rates and a fairly low GTP hydrolysis rate. Plays a role in control of the cell cycle, stress response, ribosome biogenesis and in those bacteria that undergo differentiation, in morphogenesis control. In Finegoldia magna (strain ATCC 29328 / DSM 20472 / WAL 2508) (Peptostreptococcus magnus), this protein is GTPase Obg.